Reading from the N-terminus, the 684-residue chain is MVQKYESPVRIYKYPFELVVAGFRNFCRQKSVLRRGKVCEMGSIFGEAKTTTNTWCIRRWSFAVVCKKIIIEEFLFLFVKHQLYQYLCNHIVNIEYAYHKPYNSFATRVEIFEKCRYYAHPENPDWTCFDQTATLDIKNFFGIEHSMEKMGMKQYTQTTLKGKEIIEFFVNELKQEGITHVDRWVDDATVTSTTAGAATNTTPPEKPPLCRDNSILDADYIAKYLGQLTPLQESKLVQLRKRFEHGTSEHPEPDYQTLLRFLRARDFSIDKATGMLQESLQWRKEQRIDSILGEYKTPAVVEKYFPGGWHHHDKDGRPLYILRLGTMDVKGLLKSVGEDELLKLTLHICEEGLRLMKEATKLFGKPVWNWCLLVDLDGLSMRHLWRPGVKALLRIIETVETNYPETMGRVLIVRAPRVFPVLWTIVSTFIDENTRSKFLFFGGPDCMHAEDGIEQYIDTDKIPSFLGGSCNVIDCPIVALPNSVCVNRPVSSSSFDSSIVKLSPPPALSPHAFCSVATAIAYSLHFATLNGGIAHDHHGLYKAVDLKPGQLFELLIRNTDPKSVLTWDFEVLKNDTLFAVFHTEKEIEQSGNDDFSSVFDGPDFKEGTNYKKIEQSVKCRPKEGVQGSHEMASTGTYVLQWMCPPSCDGPAQLMYFHEILSSANYKGSMTSLQSGFSSNSLQSR.

The region spanning 2–178 (VQKYESPVRI…FVNELKQEGI (177 aa)) is the PRELI/MSF1 domain. The CRAL-TRIO domain maps to 297 to 474 (TPAVVEKYFP…FLGGSCNVID (178 aa)). Residues 537–684 (HHGLYKAVDL…GFSSNSLQSR (148 aa)) form the GOLD domain.

It is found in the mitochondrion. This is Protein real-time from Anopheles gambiae (African malaria mosquito).